Here is a 372-residue protein sequence, read N- to C-terminus: Chaperone protein DnaJ (372 aa).

The J domain occupies 5-70; that stretch reads DYYDLLEVSR…EKRAGYDRYG (66 aa). Residues 134-212 form a CR-type zinc finger; that stretch reads GIQAPIHYVT…CGGSGRKRDE (79 aa). Residues Cys-147, Cys-150, Cys-164, Cys-167, Cys-186, Cys-189, Cys-200, and Cys-203 each contribute to the Zn(2+) site. CXXCXGXG motif repeat units follow at residues 147-154, 164-171, 186-193, and 200-207; these read CNTCQGTG, CNTCQGSG, CTTCYGEG, and CKKCGGSG.

The protein belongs to the DnaJ family. Homodimer. Zn(2+) serves as cofactor.

Its subcellular location is the cytoplasm. Functionally, participates actively in the response to hyperosmotic and heat shock by preventing the aggregation of stress-denatured proteins and by disaggregating proteins, also in an autonomous, DnaK-independent fashion. Unfolded proteins bind initially to DnaJ; upon interaction with the DnaJ-bound protein, DnaK hydrolyzes its bound ATP, resulting in the formation of a stable complex. GrpE releases ADP from DnaK; ATP binding to DnaK triggers the release of the substrate protein, thus completing the reaction cycle. Several rounds of ATP-dependent interactions between DnaJ, DnaK and GrpE are required for fully efficient folding. Also involved, together with DnaK and GrpE, in the DNA replication of plasmids through activation of initiation proteins. This is Chaperone protein DnaJ from Wolbachia pipientis subsp. Culex pipiens (strain wPip).